The primary structure comprises 157 residues: Eukaryotic translation initiation factor 5A-2 (157 aa).

Serine 2 carries the N-acetylserine modification. Serine 2 carries the post-translational modification Phosphoserine. Position 7 is a phosphothreonine (threonine 7). A Hypusine modification is found at lysine 51. At serine 74 the chain carries Phosphoserine. Lysine 86 is covalently cross-linked (Glycyl lysine isopeptide (Lys-Gly) (interchain with G-Cter in ubiquitin)).

Belongs to the eIF-5A family. In terms of assembly, homodimer. Binds to 80S ribosomes. Actively translating ribosomes show mutually exclusive binding of eIF5a (HYP2 or ANB1) and EFT1/eEF2. Interacts with DYS1 and LIA1. Post-translationally, lys-51 undergoes hypusination, a unique post-translational modification that consists in the addition of a butylamino group from spermidine to lysine side chain, leading to the formation of the unusual amino acid hypusine. eIF-5As are the only known proteins to undergo this modification, which is essential for their function.

It is found in the cytoplasm. In terms of biological role, translation factor that promotes translation elongation and termination, particularly upon ribosome stalling at specific amino acid sequence contexts. Binds between the exit (E) and peptidyl (P) site of the ribosome and promotes rescue of stalled ribosome: specifically required for efficient translation of polyproline-containing peptides as well as other motifs that stall the ribosome. Acts as ribosome quality control (RQC) cofactor by joining the RQC complex to facilitate peptidyl transfer during CAT tailing step. Involved in actin dynamics and cell cycle progression, mRNA decay and probably in a pathway involved in stress response and maintenance of cell wall integrity. In Saccharomyces cerevisiae (strain ATCC 204508 / S288c) (Baker's yeast), this protein is Eukaryotic translation initiation factor 5A-2 (ANB1).